The following is a 418-amino-acid chain: Light-independent protochlorophyllide reductase subunit N (418 aa).

3 residues coordinate [4Fe-4S] cluster: cysteine 17, cysteine 42, and cysteine 103.

The protein belongs to the BchN/ChlN family. Protochlorophyllide reductase is composed of three subunits; ChlL, ChlN and ChlB. Forms a heterotetramer of two ChlB and two ChlN subunits. Requires [4Fe-4S] cluster as cofactor.

The catalysed reaction is chlorophyllide a + oxidized 2[4Fe-4S]-[ferredoxin] + 2 ADP + 2 phosphate = protochlorophyllide a + reduced 2[4Fe-4S]-[ferredoxin] + 2 ATP + 2 H2O. It participates in porphyrin-containing compound metabolism; chlorophyll biosynthesis (light-independent). Functionally, component of the dark-operative protochlorophyllide reductase (DPOR) that uses Mg-ATP and reduced ferredoxin to reduce ring D of protochlorophyllide (Pchlide) to form chlorophyllide a (Chlide). This reaction is light-independent. The NB-protein (ChlN-ChlB) is the catalytic component of the complex. The protein is Light-independent protochlorophyllide reductase subunit N of Prochlorococcus marinus (strain MIT 9215).